A 247-amino-acid chain; its full sequence is MAPFWIALQFLTILPIELKTIPTAQQNGRAILFYPLVGLIIGGILFLVTCIFVKLPALLLAAIVFALWIWLTGGLHLDGLADTADAWVGGFGDKLRTLQIMKDPSCGPIGVLSIVIVCLLKFALIYVLIEQHQSLFLICIPILGRVVPSILFLTTPYVREKGLGRSLTDHLPKTASWIITGFVLLLPLYWEWQGLIAIISFLISLVYLRHVFIKRIGGITGDTVGAAIEIGETVLIFTFVVSYFYLV.

A run of 6 helical transmembrane segments spans residues 31-51 (ILFY…VTCI), 55-75 (LPAL…TGGL), 109-129 (IGVL…YVLI), 135-155 (LFLI…FLTT), 183-203 (VLLL…SFLI), and 227-247 (AIEI…FYLV).

It belongs to the CobS family. Mg(2+) is required as a cofactor.

It localises to the cell inner membrane. It catalyses the reaction alpha-ribazole + adenosylcob(III)inamide-GDP = adenosylcob(III)alamin + GMP + H(+). It carries out the reaction alpha-ribazole 5'-phosphate + adenosylcob(III)inamide-GDP = adenosylcob(III)alamin 5'-phosphate + GMP + H(+). Its pathway is cofactor biosynthesis; adenosylcobalamin biosynthesis; adenosylcobalamin from cob(II)yrinate a,c-diamide: step 7/7. Functionally, joins adenosylcobinamide-GDP and alpha-ribazole to generate adenosylcobalamin (Ado-cobalamin). Also synthesizes adenosylcobalamin 5'-phosphate from adenosylcobinamide-GDP and alpha-ribazole 5'-phosphate. The chain is Adenosylcobinamide-GDP ribazoletransferase from Acinetobacter baumannii (strain ACICU).